Here is a 66-residue protein sequence, read N- to C-terminus: MKEKIHPEYKEAKVVCACGETFVTRSTKPVIKVDICSKCHPFYTGKQKIVDTEGRVEKFMKKYSKK.

Zn(2+)-binding residues include Cys16, Cys18, Cys36, and Cys39.

The protein belongs to the bacterial ribosomal protein bL31 family. Type A subfamily. Part of the 50S ribosomal subunit. Zn(2+) is required as a cofactor.

Its function is as follows. Binds the 23S rRNA. The sequence is that of Large ribosomal subunit protein bL31 from Thermodesulfovibrio yellowstonii (strain ATCC 51303 / DSM 11347 / YP87).